The following is a 281-amino-acid chain: Phosphatidylglycerol--prolipoprotein diacylglyceryl transferase (281 aa).

Transmembrane regions (helical) follow at residues 23–43, 71–91, 107–127, and 133–153; these read IGPL…LFAW, FVIW…VLFY, WDGG…MILF, and ILVW…LGVV. R154 contributes to the a 1,2-diacyl-sn-glycero-3-phospho-(1'-sn-glycerol) binding site. 3 helical membrane passes run 189–209, 217–237, and 247–267; these read LYEA…LVWG, GFVA…VEFF, and LFGG…LLGL.

Belongs to the Lgt family.

It is found in the cell inner membrane. It carries out the reaction L-cysteinyl-[prolipoprotein] + a 1,2-diacyl-sn-glycero-3-phospho-(1'-sn-glycerol) = an S-1,2-diacyl-sn-glyceryl-L-cysteinyl-[prolipoprotein] + sn-glycerol 1-phosphate + H(+). It functions in the pathway protein modification; lipoprotein biosynthesis (diacylglyceryl transfer). In terms of biological role, catalyzes the transfer of the diacylglyceryl group from phosphatidylglycerol to the sulfhydryl group of the N-terminal cysteine of a prolipoprotein, the first step in the formation of mature lipoproteins. The chain is Phosphatidylglycerol--prolipoprotein diacylglyceryl transferase from Brucella canis (strain ATCC 23365 / NCTC 10854 / RM-666).